The sequence spans 102 residues: Small ribosomal subunit protein uS10 (102 aa).

Belongs to the universal ribosomal protein uS10 family. In terms of assembly, part of the 30S ribosomal subunit.

Its function is as follows. Involved in the binding of tRNA to the ribosomes. The chain is Small ribosomal subunit protein uS10 from Rhodopseudomonas palustris (strain HaA2).